A 78-amino-acid polypeptide reads, in one-letter code: Small ribosomal subunit protein bS18B (78 aa).

This sequence belongs to the bacterial ribosomal protein bS18 family. Part of the 30S ribosomal subunit. Forms a tight heterodimer with protein bS6.

Its function is as follows. Binds as a heterodimer with protein bS6 to the central domain of the 16S rRNA, where it helps stabilize the platform of the 30S subunit. The protein is Small ribosomal subunit protein bS18B of Streptomyces griseus subsp. griseus (strain JCM 4626 / CBS 651.72 / NBRC 13350 / KCC S-0626 / ISP 5235).